Reading from the N-terminus, the 51-residue chain is Large ribosomal subunit protein eL39 (51 aa).

The protein belongs to the eukaryotic ribosomal protein eL39 family. As to quaternary structure, component of the large ribosomal subunit. Interacts with IMPACT.

The protein localises to the cytoplasm. Functionally, RNA-binding component of the large ribosomal subunit. The ribosome is a large ribonucleoprotein complex responsible for the synthesis of proteins in the cell. This chain is Large ribosomal subunit protein eL39 (Rpl39), found in Mus musculus (Mouse).